Reading from the N-terminus, the 287-residue chain is Cysteine-rich repeat secretory protein 59 (287 aa).

A signal peptide spans 1-26; it reads METTKKLSPIFCFSSLLCLFFTMNQA. 2 consecutive Gnk2-homologous domains span residues 32-134 and 140-250; these read HMDT…DKFF and KKPN…ITTS. N43, N47, N63, N72, N93, N103, N111, and N212 each carry an N-linked (GlcNAc...) asparagine glycan.

This sequence belongs to the cysteine-rich repeat secretory protein family.

It is found in the secreted. The sequence is that of Cysteine-rich repeat secretory protein 59 (CRRSP59) from Arabidopsis thaliana (Mouse-ear cress).